Here is a 415-residue protein sequence, read N- to C-terminus: MYSPDTTKYLIHISLTAEGVVEKPDVVGAIFGQTEGLLGEDLDLRDLQRTGRVGRIDVQIASKKGETSGEILISTSLDRAETAILAASLETIDRVGPCVAHVSVKMVEDIRVSKRKKIVERAKEILVERFDDGTIDSDELLDDVRQTLRVEKIGTIGEEKLPAGPNVLESDAIIIVEGRADVINLLRYGIKNTVAVEGTNIPKSIVELTEKKTTTAFFDGDRGGELILRELLQVADIDFVAFSPRGKSVEDMSKKEVIKTLRNKVPVEYVRDQYFEDSAELPGDLGGRPARTAPAHDEGGNSDTTGKQAVSQKRIRDGTSKVPTTLRDHMDDVKGKNVARFLNQDMVVIRESRSEEVEKAVETLEEPAAGVVVDRTVDQKLLDRLVWKGLEYVAAKDFKGIIKRPLNIRLMKMSS.

Residues 171 to 250 form the Toprim domain; that stretch reads DAIIIVEGRA…AFSPRGKSVE (80 aa). Positions 177, 219, and 221 each coordinate Mg(2+). Positions 280 to 323 are disordered; it reads ELPGDLGGRPARTAPAHDEGGNSDTTGKQAVSQKRIRDGTSKVP. A compositionally biased stretch (polar residues) spans 301–311; that stretch reads NSDTTGKQAVS.

It belongs to the archaeal DnaG primase family. In terms of assembly, forms a ternary complex with MCM helicase and DNA. Mg(2+) serves as cofactor.

The enzyme catalyses ssDNA + n NTP = ssDNA/pppN(pN)n-1 hybrid + (n-1) diphosphate.. Functionally, RNA polymerase that catalyzes the synthesis of short RNA molecules used as primers for DNA polymerase during DNA replication. In Methanoregula boonei (strain DSM 21154 / JCM 14090 / 6A8), this protein is DNA primase DnaG.